The following is a 284-amino-acid chain: Release factor glutamine methyltransferase (284 aa).

S-adenosyl-L-methionine is bound by residues 123–127, D146, W174, and N189; that span reads GTGTG. Residue 189-192 participates in substrate binding; the sequence is NPPY.

The protein belongs to the protein N5-glutamine methyltransferase family. PrmC subfamily.

The enzyme catalyses L-glutaminyl-[peptide chain release factor] + S-adenosyl-L-methionine = N(5)-methyl-L-glutaminyl-[peptide chain release factor] + S-adenosyl-L-homocysteine + H(+). Its function is as follows. Methylates the class 1 translation termination release factors RF1/PrfA and RF2/PrfB on the glutamine residue of the universally conserved GGQ motif. The protein is Release factor glutamine methyltransferase of Francisella tularensis subsp. tularensis (strain SCHU S4 / Schu 4).